Reading from the N-terminus, the 944-residue chain is Tyrosine-protein kinase transmembrane receptor ROR2 (944 aa).

An N-terminal signal peptide occupies residues 1–33 (MARGWVRPSRVPLCARAVWTAAALLLWTPWTAG). At 34-403 (EVEDSEAIDT…CSPRDGSKMG (370 aa)) the chain is on the extracellular side. An Ig-like C2-type domain is found at 55-145 (PTLKGYFLNF…VATNGLKTIT (91 aa)). A glycan (N-linked (GlcNAc...) asparagine) is linked at asparagine 70. 9 cysteine pairs are disulfide-bonded: cysteine 83–cysteine 135, cysteine 174–cysteine 239, cysteine 182–cysteine 232, cysteine 223–cysteine 264, cysteine 252–cysteine 300, cysteine 256–cysteine 286, cysteine 316–cysteine 394, cysteine 337–cysteine 377, and cysteine 365–cysteine 389. Residues 169–303 (QEDGFCQPYR…SPDAANCMRI (135 aa)) form the FZ domain. N-linked (GlcNAc...) asparagine glycosylation is present at asparagine 188. The Kringle domain maps to 316–394 (CYNGSGADYR…RVELCDVPPC (79 aa)). N-linked (GlcNAc...) asparagine glycosylation occurs at asparagine 318. A helical membrane pass occupies residues 404–424 (ILYILVPSIAIPLVIACLFFL). Residues 425–944 (VCMCRNKQKA…TEAAHVQLEA (520 aa)) lie on the Cytoplasmic side of the membrane. The Protein kinase domain occupies 473-746 (VRFMEELGED…PRFKDIHSRL (274 aa)). ATP is bound by residues 479–487 (LGEDRFGKV) and lysine 507. The Proton acceptor role is filled by aspartate 615. Tyrosine 646 carries the post-translational modification Phosphotyrosine; by autocatalysis. A disordered region spans residues 757–779 (SSAQTSGASNTTQTSSLSTSPVS). Low complexity predominate over residues 765–779 (SNTTQTSSLSTSPVS). Asymmetric dimethylarginine is present on arginine 785. 2 disordered regions span residues 850-879 (QVPPQMVPKPSSHHSGSGSTSTGYVTTAPS) and 898-929 (QNIAEDVAQSPVQEAEEEEEGSVPETELLGDN). The span at 857 to 872 (PKPSSHHSGSGSTSTG) shows a compositional bias: low complexity.

Belongs to the protein kinase superfamily. Tyr protein kinase family. ROR subfamily. In terms of assembly, homodimer; promotes osteogenesis. Binds YWHAB. Interacts with WTIP. Interacts with ROR2. It depends on Mg(2+) as a cofactor.

It is found in the cell membrane. The enzyme catalyses L-tyrosyl-[protein] + ATP = O-phospho-L-tyrosyl-[protein] + ADP + H(+). Its function is as follows. Tyrosine-protein kinase receptor which may be involved in the early formation of the chondrocytes. It seems to be required for cartilage and growth plate development. Phosphorylates YWHAB, leading to induction of osteogenesis and bone formation. In contrast, has also been shown to have very little tyrosine kinase activity in vitro. May act as a receptor for wnt ligand WNT5A which may result in the inhibition of WNT3A-mediated signaling. In Mus musculus (Mouse), this protein is Tyrosine-protein kinase transmembrane receptor ROR2 (Ror2).